The sequence spans 120 residues: Large ribosomal subunit protein uL18 (120 aa).

This sequence belongs to the universal ribosomal protein uL18 family. In terms of assembly, part of the 50S ribosomal subunit; part of the 5S rRNA/L5/L18/L25 subcomplex. Contacts the 5S and 23S rRNAs.

This is one of the proteins that bind and probably mediate the attachment of the 5S RNA into the large ribosomal subunit, where it forms part of the central protuberance. In Acidiphilium cryptum (strain JF-5), this protein is Large ribosomal subunit protein uL18.